Here is a 211-residue protein sequence, read N- to C-terminus: MTTLTTLLALADSRLPIGGHVHSGGVEEAVTSGLVTNLETLHAYLVRRVRTQGLVAASIAAAVHAGTLTVAAADRETDARTPAPAARTASRAQGRGLARLARRVWPGHDWTALGRAPHLPVASGAVGAVAGLTPGQTALSVVYTTMTGSATAAQRLLALDPGDVAALTFGLAPLCDDVAAAAAEEPADLSDPLLDVLAQRHSERERPLFAS.

It belongs to the UreF family. In terms of assembly, ureD, UreF and UreG form a complex that acts as a GTP-hydrolysis-dependent molecular chaperone, activating the urease apoprotein by helping to assemble the nickel containing metallocenter of UreC. The UreE protein probably delivers the nickel.

It is found in the cytoplasm. Its function is as follows. Required for maturation of urease via the functional incorporation of the urease nickel metallocenter. This chain is Urease accessory protein UreF, found in Mycobacterium sp. (strain JLS).